A 650-amino-acid polypeptide reads, in one-letter code: Vitrin (650 aa).

The first 26 residues, 1 to 26, serve as a signal peptide directing secretion; that stretch reads MGIVVPTMKASVIEVLLVLLVTGIHS. In terms of domain architecture, LCCL spans 40 to 133; sequence TVPQINCDVK…LSLPRWRESF (94 aa). Intrachain disulfides connect Cys46/Cys62 and Cys66/Cys86. The tract at residues 198-226 is disordered; the sequence is RSTSKPFAASVTNSPRPQPVGHRSQEMEE. 2 VWFA domains span residues 265–450 and 467–640; these read DLSF…VKRV and DIGF…IQNI. N-linked (GlcNAc...) asparagine glycosylation occurs at Asn492.

In terms of assembly, binds dermatan sulfate and chondroitin sulfate.

Its subcellular location is the secreted. It localises to the extracellular space. It is found in the extracellular matrix. Its function is as follows. Promotes matrix assembly and cell adhesiveness. Plays a role in spinal cord formation by regulating the proliferation and differentiation of neural stem cells. The protein is Vitrin (Vit) of Mus musculus (Mouse).